Reading from the N-terminus, the 70-residue chain is DNA-directed RNA polymerase subunit omega (70 aa).

It belongs to the RNA polymerase subunit omega family. The RNAP catalytic core consists of 2 alpha, 1 beta, 1 beta' and 1 omega subunit. When a sigma factor is associated with the core the holoenzyme is formed, which can initiate transcription.

It carries out the reaction RNA(n) + a ribonucleoside 5'-triphosphate = RNA(n+1) + diphosphate. Promotes RNA polymerase assembly. Latches the N- and C-terminal regions of the beta' subunit thereby facilitating its interaction with the beta and alpha subunits. This Bacillus cereus (strain G9842) protein is DNA-directed RNA polymerase subunit omega.